We begin with the raw amino-acid sequence, 155 residues long: MSKVLEQVEAIVEPITNELQLELVDIAFEKEGPNWFLRIFIDKDGGVDIDECAAVSEKVSEKMDESDPITQNYFLEVSSPGAERPLKKEQDFENAVSKYVHVTSYEPIDGRKMWEGTLVSYDGTTLVITITDKTRKITCEIPKDKVAKARLAIQF.

The protein belongs to the RimP family.

The protein resides in the cytoplasm. Its function is as follows. Required for maturation of 30S ribosomal subunits. The sequence is that of Ribosome maturation factor RimP from Listeria welshimeri serovar 6b (strain ATCC 35897 / DSM 20650 / CCUG 15529 / CIP 8149 / NCTC 11857 / SLCC 5334 / V8).